The following is a 662-amino-acid chain: Probable conjugal transfer protein TrbE part 2 (662 aa).

ATP is bound at residue 307-314; the sequence is GPTGSGKS.

Belongs to the TrbE/VirB4 family.

The chain is Probable conjugal transfer protein TrbE part 2 (trbEB) from Sinorhizobium fredii (strain NBRC 101917 / NGR234).